Here is a 799-residue protein sequence, read N- to C-terminus: RasGAP-activating-like protein 1 (799 aa).

C2 domains are found at residues 1–105 (MAKS…DSWI) and 116–231 (VQGE…NGWF). Residues Asp21, Asp27, Asp74, Asp76, Asp82, Asp149, Asp155, Asp202, Asp204, and Asp210 each contribute to the Ca(2+) site. The 229-residue stretch at 316–544 (GLAGPFLDYL…SRVRDFLDQL (229 aa)) folds into the Ras-GAP domain. Thr400 carries the post-translational modification Phosphothreonine. One can recognise a PH domain in the interval 565–672 (TIVREGFLLK…WLSALRKASA (108 aa)). A Btk-type zinc finger spans residues 674 to 710 (NPGKLVACHPGAFRSGRWTCCLQAERSAAGCSRTHSA). Residues His682, Cys693, Cys694, and Cys704 each contribute to the Zn(2+) site.

Ca(2+) is required as a cofactor.

Probable inhibitory regulator of the Ras-cyclic AMP pathway. Plays a role in dendrite formation by melanocytes. The sequence is that of RasGAP-activating-like protein 1 from Mus musculus (Mouse).